We begin with the raw amino-acid sequence, 396 residues long: Tryptophan synthase beta chain (396 aa).

Position 86 is an N6-(pyridoxal phosphate)lysine (Lys-86).

It belongs to the TrpB family. In terms of assembly, tetramer of two alpha and two beta chains. Pyridoxal 5'-phosphate serves as cofactor.

It carries out the reaction (1S,2R)-1-C-(indol-3-yl)glycerol 3-phosphate + L-serine = D-glyceraldehyde 3-phosphate + L-tryptophan + H2O. Its pathway is amino-acid biosynthesis; L-tryptophan biosynthesis; L-tryptophan from chorismate: step 5/5. Functionally, the beta subunit is responsible for the synthesis of L-tryptophan from indole and L-serine. This chain is Tryptophan synthase beta chain, found in Yersinia enterocolitica serotype O:8 / biotype 1B (strain NCTC 13174 / 8081).